Consider the following 543-residue polypeptide: 2,3-bisphosphoglycerate-independent phosphoglycerate mutase (543 aa).

Mn(2+) is bound by residues Asp24 and Ser74. Ser74 serves as the catalytic Phosphoserine intermediate. Substrate contacts are provided by residues His135, 165-166, Arg197, Arg203, 268-271, and Lys341; these read RD and RPDR. Mn(2+)-binding residues include Asp408, His412, Asp449, His450, and His467.

It belongs to the BPG-independent phosphoglycerate mutase family. In terms of assembly, monomer. It depends on Mn(2+) as a cofactor.

The enzyme catalyses (2R)-2-phosphoglycerate = (2R)-3-phosphoglycerate. It functions in the pathway carbohydrate degradation; glycolysis; pyruvate from D-glyceraldehyde 3-phosphate: step 3/5. In terms of biological role, catalyzes the interconversion of 2-phosphoglycerate and 3-phosphoglycerate. The protein is 2,3-bisphosphoglycerate-independent phosphoglycerate mutase of Parasynechococcus marenigrum (strain WH8102).